A 330-amino-acid polypeptide reads, in one-letter code: FKBP12-interacting protein of 37 kDa (330 aa).

Met-1 bears the N-acetylmethionine mark. A compositionally biased stretch (acidic residues) spans 1–12 (MEFSSQDDDFGG). The interval 1-43 (MEFSSQDDDFGGDDSAANATRASGNRRSFGDLEDDEDDIFGST) is disordered. The segment covering 17–26 (ANATRASGNR) has biased composition (polar residues). A coiled-coil region spans residues 56–308 (SLRGSLKNCK…KGLEIVSELV (253 aa)).

This sequence belongs to the fl(2)d family. In terms of assembly, forms homodimers. Interacts with MTA/EMB1706. Interacts with FKBP12; interaction is inhibited by the immunosuppressive drug FK506. Interacts with VIR. Associates with MTA, MTB, VIR and HAKAI to form the m6A writer complex which is essential for adenosine methylation at specific mRNA sequences. In terms of tissue distribution, ubiquitously expressed with higher levels in primary and lateral roots, leaves, trichomes, and in pollen grains (at protein level).

The protein resides in the nucleus speckle. It localises to the nucleus. The protein localises to the nucleoplasm. In terms of biological role, probable regulatory subunit of the N6-methyltransferase complex, a multiprotein complex that mediates N6-methyladenosine (m6A) methylation at the 5'-[AG]GAC-3' consensus sites of some mRNAs. Associates with MTA, MTB, VIR and HAKAI to form the m6A writer complex which is essential for adenosine methylation at specific mRNA sequences. N6-methyladenosine (m6A) plays a role in mRNA stability, processing, translation efficiency and editing. Essential protein required during endosperm development and embryogenesis. Involved in endoreduplication, especially in trichomes. May play a role in splicing events. This Arabidopsis thaliana (Mouse-ear cress) protein is FKBP12-interacting protein of 37 kDa.